The sequence spans 402 residues: Propionate kinase (402 aa).

Positions 11 and 18 each coordinate ATP. Residue asparagine 11 coordinates Mg(2+). Arginine 86 contributes to the substrate binding site. Aspartate 143 functions as the Proton donor/acceptor in the catalytic mechanism. Residues histidine 175, 203-207 (HLGNG), 278-280 (DLR), and 326-330 (GIGEN) each bind ATP.

Belongs to the acetokinase family. TdcD subfamily. In terms of assembly, homodimer. The cofactor is Mg(2+).

The enzyme catalyses propanoate + ATP = propanoyl phosphate + ADP. It participates in amino-acid degradation; L-threonine degradation via propanoate pathway; propanoate from L-threonine: step 4/4. In terms of biological role, catalyzes the conversion of propionyl phosphate and ADP to propionate and ATP. This chain is Propionate kinase, found in Escherichia coli O157:H7.